Consider the following 287-residue polypeptide: MWLPALVLATLAASAAWAGHLSSPPLVDTLHGKVLGKFVSLEGFAQPVAVFLGIPFAKPPLGPLRFTLPQPAEPWNFVKNATSYPPMFTQDPKAGQLISELFTNRKENIPLKLSEDCLYLNIYTPADLTKKNRLPVMVWIHGGGLMVGAASTYDGLALAAHENVVVVTIQYRLGIWGFFSTGDEHSPGNWGHLDQLAALHWVQDNIASFGGNPGSVTIFGGSVGGESVSVLVLSPLAKNLFHRAISESGVALTSVLVKKGDVKPLAEVGLRLVRLRLDTPTSLALCS.

The signal sequence occupies residues 1-18; it reads MWLPALVLATLAASAAWA. Residue Asn80 is glycosylated (N-linked (GlcNAc...) asparagine).

The protein belongs to the type-B carboxylesterase/lipase family. In terms of tissue distribution, expressed in placenta.

The protein resides in the secreted. Has no esterase activity. The sequence is that of Putative inactive carboxylesterase 4 (CES1P1) from Homo sapiens (Human).